Reading from the N-terminus, the 369-residue chain is Molybdenum import ATP-binding protein ModC 1 (369 aa).

The 231-residue stretch at 10-240 folds into the ABC transporter domain; the sequence is KGYIEVAFNG…PALASRSEAA (231 aa). 42 to 49 is a binding site for ATP; the sequence is GPPGCGKT. The Mop domain occupies 297–367; sequence ASSILNVFRA…ELCGKLGDDG (71 aa).

The protein belongs to the ABC transporter superfamily. Molybdate importer (TC 3.A.1.8) family. As to quaternary structure, the complex is composed of two ATP-binding proteins (ModC), two transmembrane proteins (ModB) and a solute-binding protein (ModA).

It localises to the cell inner membrane. The catalysed reaction is molybdate(out) + ATP + H2O = molybdate(in) + ADP + phosphate + H(+). Part of the ABC transporter complex ModABC involved in molybdenum import. Responsible for energy coupling to the transport system. The protein is Molybdenum import ATP-binding protein ModC 1 of Bradyrhizobium diazoefficiens (strain JCM 10833 / BCRC 13528 / IAM 13628 / NBRC 14792 / USDA 110).